A 272-amino-acid chain; its full sequence is MARLAAFDMDGTLLMPDHQLGRETIATLSRLRERDITLTFATGRHVLEMRHILGTLSLDAYLITGNGTRIHSLEGDVLYRQDLDPQVADTVMHHAWDTGASMHVFNDNGWFTGQEIPALLQAHVYSGFRYQVIDIKSIPAHQVMKICFCGDHDSLIRLRIQLNETLEERAHLCFSAVDCLEVLPLGCNKGSALAVLSDHLGLSLADCMAFGDAMNDREMLGSVGQGLIMGNAMPQLIAALPHLSVIGHCGHQAVSHFLTHWLDNPHLPYSPE.

Residue Asp-8 is the Nucleophile of the active site. Positions 8, 10, and 212 each coordinate Mg(2+).

Belongs to the HAD-like hydrolase superfamily. Cof family. The cofactor is Mg(2+).

It catalyses the reaction 4-amino-2-methyl-5-(diphosphooxymethyl)pyrimidine + H2O = 4-amino-2-methyl-5-(phosphooxymethyl)pyrimidine + phosphate + H(+). In terms of biological role, catalyzes the hydrolysis of 4-amino-2-methyl-5-hydroxymethylpyrimidine pyrophosphate (HMP-PP) to 4-amino-2-methyl-5-hydroxymethylpyrimidine phosphate (HMP-P). The polypeptide is HMP-PP phosphatase (Salmonella arizonae (strain ATCC BAA-731 / CDC346-86 / RSK2980)).